The sequence spans 487 residues: NADH-quinone oxidoreductase subunit N (487 aa).

A run of 14 helical transmembrane segments spans residues 16–36 (VIMPEVILSVLGMALLLVNVF), 45–65 (LAWLSLIGIVGAGFAAVTGWG), 79–99 (NFAIFFKIIFLLAAGLAVLIS), 111–131 (GELYPIILFTTVGMMLMAAAT), 133–153 (LMTIFLGLELMSISLYVLAGF), 168–188 (FLLGAFSTGFLLYGMALIYGV), 212–232 (LLIGMFLMLTGFLFKIAAAPF), 257–276 (AAGFAAMLRLLLVAFPAMIA), 281–298 (LLWILAVLTMTVGNFTAL), 306–326 (MLAYSSIAHAGYCLVGFASGT), 333–353 (ILFYMLSYTFMNIGAFAVIVL), 378–398 (ALAMTVFMFSLAGMPPTAGFI), 413–435 (IWLAIIGVLNSAASVYYYLRVIV), and 457–477 (LALVVSAAGSLIPGIIPSMIL).

It belongs to the complex I subunit 2 family. As to quaternary structure, NDH-1 is composed of 14 different subunits. Subunits NuoA, H, J, K, L, M, N constitute the membrane sector of the complex.

Its subcellular location is the cell inner membrane. It carries out the reaction a quinone + NADH + 5 H(+)(in) = a quinol + NAD(+) + 4 H(+)(out). Functionally, NDH-1 shuttles electrons from NADH, via FMN and iron-sulfur (Fe-S) centers, to quinones in the respiratory chain. The immediate electron acceptor for the enzyme in this species is believed to be ubiquinone. Couples the redox reaction to proton translocation (for every two electrons transferred, four hydrogen ions are translocated across the cytoplasmic membrane), and thus conserves the redox energy in a proton gradient. This chain is NADH-quinone oxidoreductase subunit N, found in Trichlorobacter lovleyi (strain ATCC BAA-1151 / DSM 17278 / SZ) (Geobacter lovleyi).